Reading from the N-terminus, the 372-residue chain is MDPLGAAKTQWPWRRCLAALLFQLLVAVCFFSYLRVSRDDATGSPRPGLMAVEPVTGAPGGSSRQDTTPTRHTLLILLWTWPFHIPVALSRCSEMAPGTADCHITADRKVYPQADAVIVHHWDIMSNPKSRLPPSPRPQGQRWIWFSLEPPPNCQHLEALDGYFNLTMSYRSDSDIFTPYGWLEPWSGQPAHPPLNLSAKTELVAWAVSNWKPDSARVHYYQSLQAHLKVDVYGRSHKPLPKGTMMETLSRYKFYLAFENSLHPDYITEKLWRNALEAWAVPVVLGPSRSNYERFLPPDPFIHVDDFQSPKDLARYLQELDKDHARYLSYFRWRETLQPRSFSWALDFCKACWKLQQESRYQMVRSIAAWFT.

Over 1–15 the chain is Cytoplasmic; the sequence is MDPLGAAKTQWPWRR. A helical; Signal-anchor for type II membrane protein transmembrane segment spans residues 16-34; it reads CLAALLFQLLVAVCFFSYL. The Lumenal segment spans residues 35–372; sequence RVSRDDATGS…MVRSIAAWFT (338 aa). Positions 40–68 are disordered; the sequence is DATGSPRPGLMAVEPVTGAPGGSSRQDTT. N-linked (GlcNAc...) asparagine glycans are attached at residues N165 and N196.

This sequence belongs to the glycosyltransferase 10 family. Post-translationally, glycosylated.

Its subcellular location is the golgi apparatus. The protein localises to the golgi stack membrane. The enzyme catalyses a beta-D-galactosyl-(1-&gt;3)-N-acetyl-beta-D-glucosaminyl derivative + GDP-beta-L-fucose = a beta-D-galactosyl-(1-&gt;3)-[alpha-L-fucosyl-(1-&gt;4)]-N-acetyl-beta-D-glucosaminyl derivative + GDP + H(+). The catalysed reaction is an N-acetyl-alpha-neuraminyl-(2-&gt;3)-beta-D-galactosyl-(1-&gt;4)-N-acetyl-beta-D-glucosaminyl derivative + GDP-beta-L-fucose = an alpha-Neu5Ac-(2-&gt;3)-beta-D-Gal-(1-&gt;4)-[alpha-L-Fuc-(1-&gt;3)]-beta-D-GlcNAc derivative + GDP + H(+). It catalyses the reaction a beta-D-galactosyl-(1-&gt;4)-N-acetyl-beta-D-glucosaminyl derivative + GDP-beta-L-fucose = a beta-D-galactosyl-(1-&gt;4)-[alpha-L-fucosyl-(1-&gt;3)]-N-acetyl-beta-D-glucosaminyl derivative + GDP + H(+). It carries out the reaction an alpha-Neu5Ac-(2-&gt;3)-beta-D-Gal-(1-&gt;4)-beta-D-GlcNAc-(1-&gt;3)-beta-D-Gal-(1-&gt;4)-[alpha-L-Fuc-(1-&gt;3)]-beta-D-GlcNAc derivative + GDP-beta-L-fucose = an alpha-Neu5Ac-(2-&gt;3)-beta-D-Gal-(1-&gt;4)-[alpha-L-Fuc-(1-&gt;3)]-beta-D-GlcNAc-(1-&gt;3)-beta-D-Gal-(1-&gt;4)-[alpha-L-Fuc-(1-&gt;3)]-beta-D-GlcNAc derivative + GDP + H(+). The enzyme catalyses Lc4Cer + GDP-beta-L-fucose = a lactoside III(4)-a-Fuc-Lc4Cer + GDP + H(+). The catalysed reaction is a beta-D-Gal-(1-&gt;3)-beta-D-GlcNAc-(1-&gt;3)-beta-D-Gal-(1-&gt;4)-beta-D-Glc-(1&lt;-&gt;1')-Cer(d18:1(4E)) + GDP-beta-L-fucose = a III(4)-a-Fuc-Lc4Cer(d18:1(4E)) + GDP + H(+). It catalyses the reaction N-acetyl-alpha-neuraminosyl-(2-&gt;3)-beta-D-galactosyl-(1-&gt;3)-[N-acetyl-alpha-neuraminosyl-(2-&gt;6)]-N-acetyl-beta-D-glucosaminyl-(1-&gt;3)-beta-D-galactosyl-(1-&gt;4)-beta-D-glucosyl-(1&lt;-&gt;1')-N-acyl-sphing-4-enine + GDP-beta-L-fucose = N-acetyl-alpha-neuraminosyl-(2-&gt;3)-beta-D-galactosyl-(1-&gt;3)-alpha-L-fucosyl-(1-&gt;4)-[N-acetyl-alpha-neuraminosyl-(2-&gt;6)-N-acetyl-beta-D-glucosaminyl-(1-&gt;3)]-beta-D-galactosyl-(1-&gt;4)-beta-D-glucosyl-(1&lt;-&gt;1')-N-acyl-sphing-4-enine + GDP + H(+). It carries out the reaction N-acetyl-alpha-neuraminosyl-(2-&gt;3)-beta-D-galactosyl-(1-&gt;3)-N-acetyl-beta-D-glucosaminyl-(1-&gt;3)-beta-D-galactosyl-(1-&gt;4)-beta-D-glucosyl-(1&lt;-&gt;1')-N-acyl-sphing-4-enine + GDP-beta-L-fucose = N-acetyl-alpha-neuraminosyl-(2-&gt;3)-beta-D-galactosyl-(1-&gt;3)-alpha-L-fucosyl-(1-&gt;4)-[N-acetyl-beta-D-glucosaminyl-(1-&gt;3)]-beta-D-galactosyl-(1-&gt;4)-beta-D-glucosyl-(1&lt;-&gt;1')-N-acyl-sphing-4-enine + GDP + H(+). The enzyme catalyses beta-D-galactosyl-(1-&gt;3)-N-acetyl-D-glucosamine + GDP-beta-L-fucose = beta-D-galactosyl-(1-&gt;3)-[alpha-L-fucosyl-(1-&gt;4)]-N-acetyl-D-glucosamine + GDP + H(+). The catalysed reaction is alpha-L-Fuc-(1-&gt;2)-beta-D-Gal-(1-&gt;3)-D-GlcNAc + GDP-beta-L-fucose = alpha-L-Fuc-(1-&gt;2)-beta-D-Gal-(1-&gt;3)-[alpha-L-Fuc-(1-&gt;4)]-D-GlcNAc + GDP + H(+). It catalyses the reaction alpha-L-Fuc-(1-&gt;2)-beta-D-Gal-(1-&gt;4)-D-GlcNAc + GDP-beta-L-fucose = alpha-L-Fuc-(1-&gt;2)-beta-D-Gal-(1-&gt;4)-[alpha-L-Fuc-(1-&gt;3)]-D-GlcNAc + GDP + H(+). It carries out the reaction beta-D-galactosyl-(1-&gt;4)-N-acetyl-D-glucosamine + GDP-beta-L-fucose = beta-D-galactosyl-(1-&gt;4)-[alpha-L-fucosyl-(1-&gt;3)]-N-acetyl-D-glucosamine + GDP + H(+). The enzyme catalyses lactose + GDP-beta-L-fucose = beta-D-galactosyl-(1-&gt;4)-[alpha-L-fucosyl-(1-&gt;3)]-D-glucose + GDP + H(+). The catalysed reaction is an alpha-Neu5Ac-(2-&gt;3)-beta-D-Gal-(1-&gt;3)-D-GlcNAc derivative + GDP-beta-L-fucose = an alpha-Neu5Ac-(2-&gt;3)-beta-D-Gal-(1-&gt;3)-[alpha-L-Fuc-(1-&gt;4)]-beta-D-GlcNAc derivative + GDP + H(+). The protein operates within protein modification; protein glycosylation. Functionally, catalyzes the transfer of L-fucose, from a guanosine diphosphate-beta-L-fucose, to both the subterminal N-acetyl glucosamine (GlcNAc) of type 1 chain (beta-D-Gal-(1-&gt;3)-beta-D-GlcNAc) glycolipids and oligosaccharides via an alpha(1,4) linkage, and the subterminal glucose (Glc) or GlcNAc of type 2 chain (beta-D-Gal-(1-&gt;4)-beta-D-GlcNAc) oligosaccharides via an alpha(1,3) linkage, independently of the presence of terminal alpha-L-fucosyl-(1,2) moieties on the terminal galactose of these acceptors and participates in the blood groups Lewis determination and expression of Lewis a (Le(a)), lewis b (Le(b)), Lewis x/SSEA-1 (Le(x)) and lewis y (Le(y)) antigens. Also catalyzes the transfer of L-fucose to subterminal GlcNAc of sialyl- and disialyl-lactotetraosylceramide to produce sialyl Lewis a (sLe(a)) and disialyl Lewis a via an alpha(1,4) linkage and therefore may regulate cell surface sialyl Lewis a expression and consequently regulates adhesive properties to E-selectin, cell proliferation and migration. Catalyzes the transfer of an L-fucose to 3'-sialyl-N-acetyllactosamine by an alpha(1,3) linkage, which allows the formation of sialyl-Lewis x structure and therefore may regulate the sialyl-Lewis x surface antigen expression and consequently adhesive properties to E-selectin. Prefers type 1 chain over type 2 acceptors. Type 1 tetrasaccharide is a better acceptor than type 1 disaccharide suggesting that a beta anomeric configuration of GlcNAc in the substrate is preferred. Lewis-positive (Le(+)) individuals have an active enzyme while Lewis-negative (Le(-)) individuals have an inactive enzyme. This is 3-galactosyl-N-acetylglucosaminide 4-alpha-L-fucosyltransferase FUT3 from Pongo pygmaeus (Bornean orangutan).